Reading from the N-terminus, the 139-residue chain is Arsenate reductase (139 aa).

Residues Cys-10, Cys-82, and Cys-89 each act as nucleophile in the active site. Intrachain disulfides connect Cys-10–Cys-82 and Cys-82–Cys-89.

It belongs to the low molecular weight phosphotyrosine protein phosphatase family. Thioredoxin-coupled ArsC subfamily.

It localises to the cytoplasm. The enzyme catalyses arsenate + [thioredoxin]-dithiol + H(+) = arsenite + [thioredoxin]-disulfide + H2O. Functionally, catalyzes the reduction of arsenate [As(V)] to arsenite [As(III)]. The sequence is that of Arsenate reductase from Bacillus licheniformis (strain ATCC 14580 / DSM 13 / JCM 2505 / CCUG 7422 / NBRC 12200 / NCIMB 9375 / NCTC 10341 / NRRL NRS-1264 / Gibson 46).